We begin with the raw amino-acid sequence, 420 residues long: RING finger protein 39 (420 aa).

An RING-type zinc finger spans residues 88-135; sequence CPLCGGSFEDPVLLACEHSFCRACLARRWGTPPATGTEASPTACPCCG. The region spanning 210–420 is the B30.2/SPRY domain; the sequence is DDLPEDYPVV…APLRIVPAES (211 aa).

In terms of tissue distribution, expressed in testis.

The protein resides in the cytoplasm. The catalysed reaction is S-ubiquitinyl-[E2 ubiquitin-conjugating enzyme]-L-cysteine + [acceptor protein]-L-lysine = [E2 ubiquitin-conjugating enzyme]-L-cysteine + N(6)-ubiquitinyl-[acceptor protein]-L-lysine.. Its pathway is protein modification; protein ubiquitination. Functionally, plays an inhibitory role in anti-RNA viral innate immunity by targeting the adapter DDX3X and promoting its 'Lys-48'-linked polyubiquitination. Alternatively, enhances the cGAS-STING pathway activation by promoting 'Lys-63'-linked ubiquitination of STING1, facilitating the STING1-TBK1 complex formation and STING1 activation. Its function is as follows. (Microbial infection) Plays a positive role in human immunodeficiency virus (HIV-1) replication. The protein is RING finger protein 39 (RNF39) of Homo sapiens (Human).